The following is an 84-amino-acid chain: Large ribosomal subunit protein bL27 (84 aa).

Residues 1-21 (MAHKKGASSTRNGRDSNAQRL) form a disordered region. The span at 7 to 19 (ASSTRNGRDSNAQ) shows a compositional bias: polar residues.

Belongs to the bacterial ribosomal protein bL27 family.

The protein is Large ribosomal subunit protein bL27 of Clavibacter sepedonicus (Clavibacter michiganensis subsp. sepedonicus).